A 374-amino-acid polypeptide reads, in one-letter code: Methylthioribose-1-phosphate isomerase (374 aa).

Residue aspartate 251 is the Proton donor of the active site.

The protein belongs to the eIF-2B alpha/beta/delta subunits family. MtnA subfamily.

The protein resides in the cytoplasm. It localises to the nucleus. It carries out the reaction 5-(methylsulfanyl)-alpha-D-ribose 1-phosphate = 5-(methylsulfanyl)-D-ribulose 1-phosphate. It functions in the pathway amino-acid biosynthesis; L-methionine biosynthesis via salvage pathway; L-methionine from S-methyl-5-thio-alpha-D-ribose 1-phosphate: step 1/6. Catalyzes the interconversion of methylthioribose-1-phosphate (MTR-1-P) into methylthioribulose-1-phosphate (MTRu-1-P). This is Methylthioribose-1-phosphate isomerase (IDI2) from Oryza sativa subsp. japonica (Rice).